Consider the following 515-residue polypeptide: SWI/SNF-related matrix-associated actin-dependent regulator of chromatin subfamily D member 1 (515 aa).

A disordered region spans residues 1-128; the sequence is MAARAGFQSV…RNHNAKKKKM (128 aa). The segment covering 14–23 has biased composition (gly residues); the sequence is GGAGASGGAG. The interval 43–167 is interaction with ESR1, NR1H4, NR3C1, PGR and SMARCA4; sequence APGQGLYRSP…DQTIMRKRLD (125 aa). 2 positions are modified to asymmetric dimethylarginine: arginine 68 and arginine 88. Lysine 101 participates in a covalent cross-link: Glycyl lysine isopeptide (Lys-Gly) (interchain with G-Cter in SUMO2). Residues 103–117 are compositionally biased toward low complexity; that stretch reads PAPQQIKQVQQQAVQ. The interval 168–474 is interaction with SMARCC1 and SMARCC2; it reads IQEALKRPIK…VMTDVVGNSE (307 aa). Residues 180-515 are necessary for GR/NR3C1-mediated remodeling and transcription from chromatin; required for GR/NR3C1 interaction with the BRG1/SMARCA4 complex in vivo; that stretch reads RKLRIFISNT…LEQALGIRNT (336 aa). Position 203 is a phosphothreonine (threonine 203). Lysine 223 is subject to N6-acetyllysine. Residues 290-367 enclose the SWIB/MDM2 domain; the sequence is YQPPQFKLDP…PQRLHALLMP (78 aa). Residues 412–440 adopt a coiled-coil conformation; the sequence is ASQQEIATLDNKIHETIETINQLKTQREF.

Belongs to the SMARCD family. In terms of assembly, component of the multiprotein chromatin-remodeling complexes SWI/SNF: SWI/SNF-A (BAF), SWI/SNF-B (PBAF) and related complexes. The canonical complex contains a catalytic subunit (either SMARCA4/BRG1/BAF190A or SMARCA2/BRM/BAF190B), and at least SMARCE1, ACTL6A/BAF53, SMARCC1/BAF155, SMARCC2/BAF170, and SMARCB1/SNF5/BAF47. Other subunits specific to each of the complexes may also be present permitting several possible combinations developmentally and tissue specific. Component of the BAF complex, which includes at least actin (ACTB), ARID1A/BAF250A, ARID1B/BAF250B, SMARCA2/BRM, SMARCA4/BRG1/BAF190A, ACTL6A/BAF53, ACTL6B/BAF53B, SMARCE1/BAF57, SMARCC1/BAF155, SMARCC2/BAF170, SMARCB1/SNF5/INI1, and one or more SMARCD1/BAF60A, SMARCD2/BAF60B, or SMARCD3/BAF60C. In muscle cells, the BAF complex also contains DPF3. Component of neural progenitors-specific chromatin remodeling complex (npBAF complex) composed of at least, ARID1A/BAF250A or ARID1B/BAF250B, SMARCD1/BAF60A, SMARCD3/BAF60C, SMARCA2/BRM/BAF190B, SMARCA4/BRG1/BAF190A, SMARCB1/BAF47, SMARCC1/BAF155, SMARCE1/BAF57, SMARCC2/BAF170, PHF10/BAF45A, ACTL6A/BAF53A and actin. Component of neuron-specific chromatin remodeling complex (nBAF complex) composed of at least, ARID1A/BAF250A or ARID1B/BAF250B, SMARCD1/BAF60A, SMARCD3/BAF60C, SMARCA2/BRM/BAF190B, SMARCA4/BRG1/BAF190A, SMARCB1/BAF47, SMARCC1/BAF155, SMARCE1/BAF57, SMARCC2/BAF170, DPF1/BAF45B, DPF3/BAF45C, ACTL6B/BAF53B and actin. Component of the SWI/SNF-B (PBAF) chromatin remodeling complex, at least composed of SMARCA4/BRG1, SMARCB1/BAF47/SNF5, ACTL6A/BAF53A or ACTL6B/BAF53B, SMARCE1/BAF57, SMARCD1/BAF60A, SMARCD2/BAF60B, perhaps SMARCD3/BAF60C, SMARCC1/BAF155, SMARCC2/BAF170, PBRM1/BAF180, ARID2/BAF200 and actin (ACTB). Component of SWI/SNF (GBAF) subcomplex, which includes at least BICRA or BICRAL (mutually exclusive), BRD9, SS18, SMARCA2/BRM, SMARCA4/BRG1/BAF190A, ACTL6A/BAF53, SMARCC1/BAF155, and SMARCD1/BAF60A. Specifically interacts with the VDR heterodimer complex. Interacts with ESR1, NR3C1, NR1H4, PGR, SMARCA4, SMARCC1 and SMARCC2. Interacts with DPF2. Interacts with FOS, FOSB, FOSL1 and FOSL2.

The protein localises to the nucleus. In terms of biological role, involved in transcriptional activation and repression of select genes by chromatin remodeling (alteration of DNA-nucleosome topology). Component of SWI/SNF chromatin remodeling complexes that carry out key enzymatic activities, changing chromatin structure by altering DNA-histone contacts within a nucleosome in an ATP-dependent manner. Belongs to the neural progenitors-specific chromatin remodeling complex (npBAF complex) and the neuron-specific chromatin remodeling complex (nBAF complex). During neural development a switch from a stem/progenitor to a postmitotic chromatin remodeling mechanism occurs as neurons exit the cell cycle and become committed to their adult state. The transition from proliferating neural stem/progenitor cells to postmitotic neurons requires a switch in subunit composition of the npBAF and nBAF complexes. As neural progenitors exit mitosis and differentiate into neurons, npBAF complexes which contain ACTL6A/BAF53A and PHF10/BAF45A, are exchanged for homologous alternative ACTL6B/BAF53B and DPF1/BAF45B or DPF3/BAF45C subunits in neuron-specific complexes (nBAF). The npBAF complex is essential for the self-renewal/proliferative capacity of the multipotent neural stem cells. The nBAF complex along with CREST plays a role regulating the activity of genes essential for dendrite growth. Has a strong influence on vitamin D-mediated transcriptional activity from an enhancer vitamin D receptor element (VDRE). May be a link between mammalian SWI-SNF-like chromatin remodeling complexes and the vitamin D receptor (VDR) heterodimer. Mediates critical interactions between nuclear receptors and the BRG1/SMARCA4 chromatin-remodeling complex for transactivation. Interacts with AKIRIN2. This is SWI/SNF-related matrix-associated actin-dependent regulator of chromatin subfamily D member 1 (SMARCD1) from Bos taurus (Bovine).